A 496-amino-acid polypeptide reads, in one-letter code: NADP-dependent glyceraldehyde-3-phosphate dehydrogenase (496 aa).

Residues R116 and 169-170 (NY) contribute to the substrate site. NADP(+) is bound by residues K192, T195, and D230. 245–249 (GGDTG) is an NAD(+) binding site. E264 (proton acceptor) is an active-site residue. Substrate is bound at residue 297-299 (RCT). The active-site Nucleophile is the C298. E391 contacts NADP(+). R451 is a binding site for substrate.

This sequence belongs to the aldehyde dehydrogenase family.

It localises to the cytoplasm. The enzyme catalyses D-glyceraldehyde 3-phosphate + NADP(+) + H2O = (2R)-3-phosphoglycerate + NADPH + 2 H(+). Important as a means of generating NADPH for biosynthetic reactions. This chain is NADP-dependent glyceraldehyde-3-phosphate dehydrogenase (GAPN), found in Pisum sativum (Garden pea).